The chain runs to 166 residues: 3-dehydroquinate dehydratase (166 aa).

Y22 (proton acceptor) is an active-site residue. Residues N73, H79, and D86 each coordinate substrate. H99 (proton donor) is an active-site residue. Substrate-binding positions include 100 to 101 (IT) and R110.

This sequence belongs to the type-II 3-dehydroquinase family. Homododecamer.

It catalyses the reaction 3-dehydroquinate = 3-dehydroshikimate + H2O. It functions in the pathway metabolic intermediate biosynthesis; chorismate biosynthesis; chorismate from D-erythrose 4-phosphate and phosphoenolpyruvate: step 3/7. In terms of biological role, catalyzes a trans-dehydration via an enolate intermediate. This Wolinella succinogenes (strain ATCC 29543 / DSM 1740 / CCUG 13145 / JCM 31913 / LMG 7466 / NCTC 11488 / FDC 602W) (Vibrio succinogenes) protein is 3-dehydroquinate dehydratase.